Here is a 397-residue protein sequence, read N- to C-terminus: Elongation factor Tu (397 aa).

A tr-type G domain is found at 10-207 (LPHVNVGTIG…TLDSYIPDPV (198 aa)). A G1 region spans residues 19–26 (GHVDHGKT). 19–26 (GHVDHGKT) provides a ligand contact to GTP. Residue Thr-26 participates in Mg(2+) binding. Positions 60–64 (GITIN) are G2. A G3 region spans residues 81 to 84 (DCPG). GTP-binding positions include 81–85 (DCPGH) and 136–139 (NKAD). Residues 136–139 (NKAD) are G4. Residues 174-176 (SAR) are G5.

Belongs to the TRAFAC class translation factor GTPase superfamily. Classic translation factor GTPase family. EF-Tu/EF-1A subfamily. As to quaternary structure, monomer.

The protein localises to the cytoplasm. It carries out the reaction GTP + H2O = GDP + phosphate + H(+). GTP hydrolase that promotes the GTP-dependent binding of aminoacyl-tRNA to the A-site of ribosomes during protein biosynthesis. This is Elongation factor Tu from Pseudomonas fluorescens (strain SBW25).